The primary structure comprises 1258 residues: Serine/threonine-protein kinase Nek1 (1258 aa).

Residues 4-258 form the Protein kinase domain; that stretch reads YVRLQKIGEG…VNSILEKGFI (255 aa). ATP contacts are provided by residues 10–18 and Lys33; that span reads IGEGSFGKA. Asp128 (proton acceptor) is an active-site residue. Phosphothreonine is present on Thr156. Thr162 is subject to Phosphothreonine; by autocatalysis. A disordered region spans residues 330 to 360; it reads HEKKPLQKHKQAHQTPEKRVNTGEERRKISE. Over residues 344–360 the composition is skewed to basic and acidic residues; sequence TPEKRVNTGEERRKISE. Phosphoserine occurs at positions 414, 418, 428, and 438. 3 disordered regions span residues 578–600, 648–669, and 685–704; these read KLRG…EADM, KSSD…SKQQ, and VDSS…KTNN. Basic and acidic residues predominate over residues 579-591; sequence LRGEKKEANHSEG. Ser653 bears the Phosphoserine mark. A Phosphothreonine modification is found at Thr661. At Ser664 the chain carries Phosphoserine. Basic and acidic residues predominate over residues 691-700; it reads DTRETSEEMQ. Phosphoserine is present on residues Ser798, Ser834, Ser868, Ser881, Ser1052, and Ser1126. Residues 1118–1171 form a disordered region; sequence REQPGEEYSEEEESVLKNSDVEPTANGTDVADEDDNPSSESALNEEWHSDNSDG.

It belongs to the protein kinase superfamily. NEK Ser/Thr protein kinase family. NIMA subfamily. As to quaternary structure, binds to CBY2. Found in a complex with CFAP410, NEK1 and SPATA7. Interacts with CFAP410. Interacts (via Ser-1052 phosphorylated form) with 14-3-3 proteins. It depends on Mg(2+) as a cofactor. High fetal expression in the brain and kidney.

It is found in the nucleus. It localises to the cytoplasm. The protein resides in the cytoskeleton. Its subcellular location is the microtubule organizing center. The protein localises to the centrosome. It catalyses the reaction L-seryl-[protein] + ATP = O-phospho-L-seryl-[protein] + ADP + H(+). The catalysed reaction is L-threonyl-[protein] + ATP = O-phospho-L-threonyl-[protein] + ADP + H(+). Functionally, phosphorylates serines and threonines, but also appears to possess tyrosine kinase activity. Involved in DNA damage checkpoint control and for proper DNA damage repair. In response to injury that includes DNA damage, NEK1 phosphorylates VDAC1 to limit mitochondrial cell death. May be implicated in the control of meiosis. Involved in cilium assembly. The protein is Serine/threonine-protein kinase Nek1 (NEK1) of Homo sapiens (Human).